The following is a 66-amino-acid chain: MQTGTVKWFNSEKGFGFIEVEGGDDVFVHFSAIEGEGFKTLDEGQSVEFEIVEGQRGPQAEKVTKL.

The CSD domain maps to 4 to 63 (GTVKWFNSEKGFGFIEVEGGDDVFVHFSAIEGEGFKTLDEGQSVEFEIVEGQRGPQAEKV).

Homodimer.

It is found in the cytoplasm. This chain is Cold shock-like protein CspLB (cspLB), found in Listeria monocytogenes serovar 1/2a (strain ATCC BAA-679 / EGD-e).